Consider the following 103-residue polypeptide: Large ribosomal subunit protein bL21 (103 aa).

This sequence belongs to the bacterial ribosomal protein bL21 family. In terms of assembly, part of the 50S ribosomal subunit. Contacts protein L20.

Functionally, this protein binds to 23S rRNA in the presence of protein L20. The polypeptide is Large ribosomal subunit protein bL21 (Erwinia tasmaniensis (strain DSM 17950 / CFBP 7177 / CIP 109463 / NCPPB 4357 / Et1/99)).